A 3476-amino-acid chain; its full sequence is Abnormal spindle-like microcephaly-associated protein homolog (3476 aa).

The segment at 1-30 (MANRRVGRGCWEVSPTERRPPAGLRGPAAE) is disordered. Residues S280, S283, S367, S392, and S425 each carry the phosphoserine modification. 2 disordered regions span residues 416–443 (SNEN…ECQG) and 562–581 (APSS…GSME). The residue at position 604 (S604) is a Phosphoserine. Positions 919–1055 (KASKEILLAF…LLWKIAFAFQ (137 aa)) constitute a Calponin-homology (CH) 1 domain. A coiled-coil region spans residues 1056–1077 (VDISLNLDQLKEEIAFLKHTKS). Position 1102 is a phosphoserine (S1102). Positions 1109–1260 (SENIKLLMDW…YLSFLCARLL (152 aa)) constitute a Calponin-homology (CH) 2 domain. 40 IQ domains span residues 1346–1377 (QNKA…IILQ), 1392–1421 (YLWA…MLKS), 1581–1612 (LKKT…VIIQ), 1604–1633 (MKKA…KTRS), 1631–1660 (TRSA…SVIK), 1654–1683 (ILTS…ATIK), 1727–1756 (MRES…AVIS), 1750–1781 (QRKA…IVIQ), 1800–1829 (VKKA…AALK), 1823–1852 (QSIA…SIIK), 1873–1902 (TKAA…AVLK), 1896–1927 (EHQA…LVIQ), 1946–1977 (LRHA…VIIQ), 1969–2000 (QHKC…LLIQ), 2019–2048 (TKAA…AAVT), 2042–2073 (CNKA…IIIQ), 2092–2123 (LKKT…TFIK), 2115–2146 (MHRA…IVIQ), 2165–2196 (ILKA…TLIQ), 2238–2269 (LRHS…TLIQ), 2261–2292 (MHIA…ILIQ), 2310–2341 (VQNA…TFIQ), 2333–2364 (MHRA…VVIQ), 2383–2414 (QRHS…TLIQ), 2406–2437 (MHSS…IFVQ), 2456–2487 (LRKA…ILIQ), 2479–2510 (MQRA…ILIQ), 2529–2560 (QWHS…IIIQ), 2623–2652 (QHQA…TVVS), 2664–2695 (RTQA…TLIQ), 2687–2718 (MHQA…VVIQ), 2737–2766 (VQKS…EKVA), 2858–2889 (QKRA…VVLQ), 2908–2937 (IRSS…STIK), 2931–2962 (IKNS…KIQA), 2953–2984 (KVKA…KIIQ), 3028–3059 (RHRA…LIIQ), 3078–3109 (FKKS…RLLH), 3180–3209 (RNRA…GIIK), and 3203–3234 (FTSG…IRLS).

The protein resides in the cytoplasm. The protein localises to the cytoskeleton. Its subcellular location is the spindle. It localises to the nucleus. Its function is as follows. Probable role in mitotic spindle regulation and coordination of mitotic processes. May have a preferential role in regulating neurogenesis. The protein is Abnormal spindle-like microcephaly-associated protein homolog (ASPM) of Gorilla gorilla gorilla (Western lowland gorilla).